A 441-amino-acid chain; its full sequence is Ribosomal protein uS12 methylthiotransferase RimO (441 aa).

Residues 8-118 (PKIGFVSLGC…VLEHVHHYSP (111 aa)) enclose the MTTase N-terminal domain. [4Fe-4S] cluster contacts are provided by Cys17, Cys53, Cys82, Cys150, Cys154, and Cys157. In terms of domain architecture, Radical SAM core spans 136–373 (LTPRHYAYLK…MQLQQQISAE (238 aa)). In terms of domain architecture, TRAM spans 376–441 (QEKVGREILV…DEYDLWGTRV (66 aa)).

The protein belongs to the methylthiotransferase family. RimO subfamily. Requires [4Fe-4S] cluster as cofactor.

Its subcellular location is the cytoplasm. It carries out the reaction L-aspartate(89)-[ribosomal protein uS12]-hydrogen + (sulfur carrier)-SH + AH2 + 2 S-adenosyl-L-methionine = 3-methylsulfanyl-L-aspartate(89)-[ribosomal protein uS12]-hydrogen + (sulfur carrier)-H + 5'-deoxyadenosine + L-methionine + A + S-adenosyl-L-homocysteine + 2 H(+). Its function is as follows. Catalyzes the methylthiolation of an aspartic acid residue of ribosomal protein uS12. This is Ribosomal protein uS12 methylthiotransferase RimO from Klebsiella pneumoniae (strain 342).